Reading from the N-terminus, the 354-residue chain is MNALELHAVHKSFGGVPAVQDISLSMPAGSRTAIVGPSGSGKTTLLRMIAGFEFPDRGRISLNGQVLADAQGAVPAHQRLIGYVPQDGALFPHLNVAANIGFGLTGKNPQRQQRIAELLDMVALDSSLAARWPHELSGGQQQRVALARALAQRPRLMLLDEPFSALDTGLRASMRKAVARLLAEAGVTTILVTHDQAEALSFADQLAVMRQGRLVQAGAPLELYQHPRDAQTALFLGEAVLLPAQLDQGLAQCDLGQVPIRERSLKGPARIMLRPEQLLVLADDGDGAGSCPGVVRDCDFAGNTCTLSIGVAGAGGHEQLVPVRSSGLHALPVGSRVRIRTLGHAHVLGAAPGA.

Positions 4-236 constitute an ABC transporter domain; that stretch reads LELHAVHKSF…PRDAQTALFL (233 aa). 36–43 is a binding site for ATP; the sequence is GPSGSGKT.

Belongs to the ABC transporter superfamily. Fe(3+) ion importer (TC 3.A.1.10) family. The complex is composed of two ATP-binding proteins (FbpC), two transmembrane proteins (FbpB) and a solute-binding protein (FbpA).

It localises to the cell inner membrane. The catalysed reaction is Fe(3+)(out) + ATP + H2O = Fe(3+)(in) + ADP + phosphate + H(+). Functionally, part of the ABC transporter complex FbpABC involved in Fe(3+) ions import. Responsible for energy coupling to the transport system. This Pseudomonas fluorescens (strain ATCC BAA-477 / NRRL B-23932 / Pf-5) protein is Fe(3+) ions import ATP-binding protein FbpC.